A 372-amino-acid polypeptide reads, in one-letter code: C-X-C chemokine receptor type 5 (372 aa).

Over 1 to 55 (MNYPLTLEMDLENLEDLFWELDRLDNYNDTSLVENHLCPATEGPLMASFKAVFVP) the chain is Extracellular. A glycan (N-linked (GlcNAc...) asparagine) is linked at N28. Residues 56–76 (VAYSLIFLLGVIGNVLVLVIL) traverse the membrane as a helical segment. Over 77–88 (ERHRQTRSSTET) the chain is Cytoplasmic. The chain crosses the membrane as a helical span at residues 89–109 (FLFHLAVADLLLVFILPFAVA). The Extracellular segment spans residues 110–124 (EGSVGWVLGTFLCKT). Cysteines 122 and 202 form a disulfide. The helical transmembrane segment at 125-145 (VIALHKVNFYCSSLLLACIAV) threads the bilayer. Residues 146–167 (DRYLAIVHAVHAYRHRRLLSIH) are Cytoplasmic-facing. The chain crosses the membrane as a helical span at residues 168–188 (ITCGTIWLVGFLLALPEILFA). Topologically, residues 189–219 (KVSQGHHNNSLPRCTFSQENQAETHAWFTSR) are extracellular. An N-linked (GlcNAc...) asparagine glycan is attached at N196. Residues 220–240 (FLYHVAGFLLPMLVMGWCYVG) form a helical membrane-spanning segment. The Cytoplasmic segment spans residues 241–259 (VVHRLRQAQRRPQRQKAVR). Residues 260–280 (VAILVTSIFFLCWSPYHIVIF) form a helical membrane-spanning segment. The Extracellular portion of the chain corresponds to 281–304 (LDTLARLKAVDNTCKLNGSLPVAI). A helical transmembrane segment spans residues 305 to 325 (TMCEFLGLAHCCLNPMLYTFA). Residues 326 to 372 (GVKFRSDLSRLLTKLGCTGPASLCQLFPSWRRSSLSESENATSLTTF) are Cytoplasmic-facing.

Belongs to the G-protein coupled receptor 1 family. As to expression, expression in mature B-cells and Burkitt lymphoma cells.

It is found in the cell membrane. Cytokine receptor that binds to B-lymphocyte chemoattractant (BLC). Involved in B-cell migration into B-cell follicles of spleen and Peyer patches but not into those of mesenteric or peripheral lymph nodes. May have a regulatory function in Burkitt lymphoma (BL) lymphomagenesis and/or B-cell differentiation. This chain is C-X-C chemokine receptor type 5 (CXCR5), found in Homo sapiens (Human).